The following is a 108-amino-acid chain: MAEEFVQQRLANNKVTIFVKYTCPFCRNALDILNKFSFKRGAYEIVDIKEFKPENELRDYFEQITGGRTVPRIFFGKTSIGGYSDLLEIDNMDALGDILSSIGVLRTC.

The Glutaredoxin domain occupies 3–106 (EEFVQQRLAN…DILSSIGVLR (104 aa)). Residues C23 and C26 are joined by a disulfide bond.

It belongs to the glutaredoxin family.

It is found in the virion. Displays thioltransferase and dehydroascorbate reductase activities. The polypeptide is Glutaredoxin-1 (OPG075) (Vaccinia virus (strain Copenhagen) (VACV)).